Here is an 80-residue protein sequence, read N- to C-terminus: Conotoxin VnMSGL-0121 (80 aa).

An N-terminal signal peptide occupies residues 1–20 (MSGLGIMVLTLLLLVSMATS). Positions 21 to 44 (HQDGGGKQATQRDAINVRRRRSIT) are excised as a propeptide. Cystine bridges form between Cys52/Cys65, Cys56/Cys74, and Cys64/Cys78. Phe79 carries the post-translational modification Phenylalanine amide.

Belongs to the conotoxin O3 superfamily. As to expression, expressed by the venom duct.

Its subcellular location is the secreted. In Conus ventricosus (Mediterranean cone), this protein is Conotoxin VnMSGL-0121.